A 264-amino-acid polypeptide reads, in one-letter code: Thymidylate synthase (264 aa).

DUMP is bound at residue Arg21. His51 serves as a coordination point for (6R)-5,10-methylene-5,6,7,8-tetrahydrofolate. Residue 126 to 127 (RR) coordinates dUMP. Cys146 functions as the Nucleophile in the catalytic mechanism. DUMP is bound by residues 166–169 (RSAD), Asn177, and 207–209 (HLY). Asp169 serves as a coordination point for (6R)-5,10-methylene-5,6,7,8-tetrahydrofolate. Residue Ala263 coordinates (6R)-5,10-methylene-5,6,7,8-tetrahydrofolate.

Belongs to the thymidylate synthase family. Bacterial-type ThyA subfamily. In terms of assembly, homodimer.

The protein localises to the cytoplasm. The catalysed reaction is dUMP + (6R)-5,10-methylene-5,6,7,8-tetrahydrofolate = 7,8-dihydrofolate + dTMP. Its pathway is pyrimidine metabolism; dTTP biosynthesis. Its function is as follows. Catalyzes the reductive methylation of 2'-deoxyuridine-5'-monophosphate (dUMP) to 2'-deoxythymidine-5'-monophosphate (dTMP) while utilizing 5,10-methylenetetrahydrofolate (mTHF) as the methyl donor and reductant in the reaction, yielding dihydrofolate (DHF) as a by-product. This enzymatic reaction provides an intracellular de novo source of dTMP, an essential precursor for DNA biosynthesis. The protein is Thymidylate synthase of Paramagnetospirillum magneticum (strain ATCC 700264 / AMB-1) (Magnetospirillum magneticum).